The following is a 382-amino-acid chain: 2-heptyl-3-hydroxy-4(1H)-quinolone synthase (382 aa).

Belongs to the 3-hydroxybenzoate 6-hydroxylase family.

The enzyme catalyses 2-heptyl-4(1H)-quinolone + NADH + O2 + H(+) = 2-heptyl-3-hydroxy-4(1H)-quinolone + NAD(+) + H2O. Involved in the terminal step of the biosynthesis of quinolone which in addition to serve as a potent signal for quorum sensing, chelates iron and promotes the formation of membrane vesicles (MVs). Catalyzes the hydroxylation of 2-heptyl-4-quinolone (C7-HHQ) to yield 2-heptyl-3-hydroxy-4-quinolone (PQS). The polypeptide is 2-heptyl-3-hydroxy-4(1H)-quinolone synthase (pqsH) (Pseudomonas aeruginosa (strain ATCC 15692 / DSM 22644 / CIP 104116 / JCM 14847 / LMG 12228 / 1C / PRS 101 / PAO1)).